The sequence spans 299 residues: GTPase Era (299 aa).

The region spanning 5-175 (RSGFVCFVGR…TNVLVSQLPP (171 aa)) is the Era-type G domain. Residues 13 to 20 (GRPNTGKS) are G1. 13-20 (GRPNTGKS) lines the GTP pocket. The segment at 39-43 (QTTRH) is G2. The interval 60–63 (DTPG) is G3. GTP contacts are provided by residues 60–64 (DTPGL) and 124–127 (TKID). The G4 stretch occupies residues 124–127 (TKID). A G5 region spans residues 154–156 (VSA). The region spanning 206 to 285 (VRDELPHSLA…YLDLRVKIAK (80 aa)) is the KH type-2 domain.

This sequence belongs to the TRAFAC class TrmE-Era-EngA-EngB-Septin-like GTPase superfamily. Era GTPase family. In terms of assembly, monomer. Stays in the monomer conformation, irrespective of the presence of GTP.

It is found in the cell envelope. It localises to the secreted. The protein resides in the cell wall. With respect to regulation, co-purified with RNA upon overexpression in E.coli, but RNAs do not appear to influence the GTPase activity. In terms of biological role, exhibits GTPase activity. Binds RNA but is probably not involved in ribosome assembly in mycobacteria. Cannot use ATP. The protein is GTPase Era of Mycolicibacterium smegmatis (strain ATCC 700084 / mc(2)155) (Mycobacterium smegmatis).